We begin with the raw amino-acid sequence, 39 residues long: Mating pheromone Er-11 (39 aa).

3 disulfide bridges follow: cysteine 3–cysteine 19, cysteine 10–cysteine 34, and cysteine 15–cysteine 26.

As to quaternary structure, homodimer.

Its subcellular location is the secreted. In terms of biological role, mating ciliate pheromones (or gamones) are diffusible extracellular communication signals that distinguish different intraspecific classes of cells commonly referred to as 'mating types'. They prepare the latter for conjugation by changing their cell surface properties. This is Mating pheromone Er-11 (MAT11) from Euplotes raikovi.